Consider the following 277-residue polypeptide: UBX domain-containing protein 10 (277 aa).

Positions 1–102 (MAIEAPVNFA…APDEMPELLL (102 aa)) are disordered. The segment covering 16–31 (TVVSTAGDSSTWQPSS) has biased composition (polar residues). The segment covering 35-50 (HVIRPKSAKGRKRPNL) has biased composition (basic residues). Positions 60 to 77 (SPSALSSSPPPRSSGSPS) are enriched in low complexity. Ser-88 bears the Phosphoserine mark. In terms of domain architecture, UBX spans 191–268 (DEEPRLLLAV…GILHKSVLGI (78 aa)).

This sequence belongs to the UBXN10 family. In terms of assembly, interacts with CLUAP1; the interaction is direct and mediates interaction with the intraflagellar transport complex B (IFT-B). Interacts with VCP; the interaction is direct.

It is found in the cell projection. The protein resides in the cilium. Its function is as follows. VCP/p97-binding protein required for ciliogenesis. Acts as a tethering factor that facilitates recruitment of VCP/p97 to the intraflagellar transport complex B (IFT-B) in cilia. UBX domain-containing proteins act as tethering factors for VCP/p97 and may specify substrate specificity of VCP/p97. The protein is UBX domain-containing protein 10 of Mus musculus (Mouse).